Consider the following 329-residue polypeptide: DNA-directed RNA polymerase subunit alpha (329 aa).

The interval Met-1–Arg-235 is alpha N-terminal domain (alpha-NTD). Positions Phe-249–Glu-329 are alpha C-terminal domain (alpha-CTD).

It belongs to the RNA polymerase alpha chain family. As to quaternary structure, homodimer. The RNAP catalytic core consists of 2 alpha, 1 beta, 1 beta' and 1 omega subunit. When a sigma factor is associated with the core the holoenzyme is formed, which can initiate transcription.

The enzyme catalyses RNA(n) + a ribonucleoside 5'-triphosphate = RNA(n+1) + diphosphate. Its function is as follows. DNA-dependent RNA polymerase catalyzes the transcription of DNA into RNA using the four ribonucleoside triphosphates as substrates. The sequence is that of DNA-directed RNA polymerase subunit alpha from Photorhabdus laumondii subsp. laumondii (strain DSM 15139 / CIP 105565 / TT01) (Photorhabdus luminescens subsp. laumondii).